The following is a 54-amino-acid chain: UPF0391 membrane protein Bpet1858 (54 aa).

2 helical membrane-spanning segments follow: residues 5 to 25 (AVVFFVIAIIAAVLGFGGIAA) and 27 to 47 (AAGIAKILFFVFLILALLSIL).

Belongs to the UPF0391 family.

It localises to the cell membrane. This chain is UPF0391 membrane protein Bpet1858, found in Bordetella petrii (strain ATCC BAA-461 / DSM 12804 / CCUG 43448).